Reading from the N-terminus, the 457-residue chain is ATP synthase subunit beta (457 aa).

Residue 147-154 coordinates ATP; sequence GGAGVGKT.

Belongs to the ATPase alpha/beta chains family. As to quaternary structure, F-type ATPases have 2 components, CF(1) - the catalytic core - and CF(0) - the membrane proton channel. CF(1) has five subunits: alpha(3), beta(3), gamma(1), delta(1), epsilon(1). CF(0) has three main subunits: a(1), b(2) and c(9-12). The alpha and beta chains form an alternating ring which encloses part of the gamma chain. CF(1) is attached to CF(0) by a central stalk formed by the gamma and epsilon chains, while a peripheral stalk is formed by the delta and b chains.

It localises to the cell inner membrane. The enzyme catalyses ATP + H2O + 4 H(+)(in) = ADP + phosphate + 5 H(+)(out). Its function is as follows. Produces ATP from ADP in the presence of a proton gradient across the membrane. The catalytic sites are hosted primarily by the beta subunits. The protein is ATP synthase subunit beta of Actinobacillus pleuropneumoniae serotype 3 (strain JL03).